We begin with the raw amino-acid sequence, 180 residues long: Pro-glucagon (180 aa).

Residues 1–20 (MKTIYFVAGLFVMLVQGSWQ) form the signal peptide. A disordered region spans residues 25-59 (NTEEKSRSFPAPQTDPLDDPDQMTEDKRHSQGTFT). Position 54 is a phosphoserine (serine 54). Positions 84 to 89 (NKNNIA) are excised as a propeptide. Phosphoserine occurs at positions 105 and 108. Arginine 127 carries the post-translational modification Arginine amide. Residues 131-145 (DFPEEVTIVEELRRR) constitute a propeptide that is removed on maturation. A phosphoserine mark is found at serine 150 and serine 152.

The protein belongs to the glucagon family. In terms of processing, proglucagon is post-translationally processed in a tissue-specific manner in pancreatic A cells and intestinal L cells. In pancreatic A cells, the major bioactive hormone is glucagon cleaved by PCSK2/PC2. In the intestinal L cells PCSK1/PC1 liberates GLP-1, GLP-2, glicentin and oxyntomodulin. GLP-1 is further N-terminally truncated by post-translational processing in the intestinal L cells resulting in GLP-1(7-37) GLP-1-(7-36)amide. The C-terminal amidation is neither important for the metabolism of GLP-1 nor for its effects on the endocrine pancreas. In terms of tissue distribution, glucagon is secreted in the A cells of the islets of Langerhans. GLP-1, GLP-2, oxyntomodulin and glicentin are secreted from enteroendocrine cells throughout the gastrointestinal tract. GLP-1 and GLP-2 are also secreted in selected neurons in the brain.

It is found in the secreted. In terms of biological role, plays a key role in glucose metabolism and homeostasis. Regulates blood glucose by increasing gluconeogenesis and decreasing glycolysis. A counterregulatory hormone of insulin, raises plasma glucose levels in response to insulin-induced hypoglycemia. Plays an important role in initiating and maintaining hyperglycemic conditions in diabetes. Potent stimulator of glucose-dependent insulin release. Also stimulates insulin release in response to IL6. Plays important roles on gastric motility and the suppression of plasma glucagon levels. May be involved in the suppression of satiety and stimulation of glucose disposal in peripheral tissues, independent of the actions of insulin. Has growth-promoting activities on intestinal epithelium. May also regulate the hypothalamic pituitary axis (HPA) via effects on LH, TSH, CRH, oxytocin, and vasopressin secretion. Increases islet mass through stimulation of islet neogenesis and pancreatic beta cell proliferation. Inhibits beta cell apoptosis. Functionally, stimulates intestinal growth and up-regulates villus height in the small intestine, concomitant with increased crypt cell proliferation and decreased enterocyte apoptosis. The gastrointestinal tract, from the stomach to the colon is the principal target for GLP-2 action. Plays a key role in nutrient homeostasis, enhancing nutrient assimilation through enhanced gastrointestinal function, as well as increasing nutrient disposal. Stimulates intestinal glucose transport and decreases mucosal permeability. Its function is as follows. Significantly reduces food intake. Inhibits gastric emptying in humans. Suppression of gastric emptying may lead to increased gastric distension, which may contribute to satiety by causing a sensation of fullness. In terms of biological role, may modulate gastric acid secretion and the gastro-pyloro-duodenal activity. May play an important role in intestinal mucosal growth in the early period of life. The protein is Pro-glucagon (GCG) of Sus scrofa (Pig).